Consider the following 151-residue polypeptide: Sec-independent protein translocase protein TatB (151 aa).

A helical transmembrane segment spans residues 1–21 (MFDVSFTELMVIGVIALVVIG). Residues 66–151 (MDETARSMQT…DKTPPTGSAT (86 aa)) are disordered. Positions 93–103 (AELDDTARDAS) are enriched in basic and acidic residues. 2 stretches are compositionally biased toward low complexity: residues 109-122 (ADAP…VASD) and 133-151 (APPA…GSAT).

Belongs to the TatB family. In terms of assembly, the Tat system comprises two distinct complexes: a TatABC complex, containing multiple copies of TatA, TatB and TatC subunits, and a separate TatA complex, containing only TatA subunits. Substrates initially bind to the TatABC complex, which probably triggers association of the separate TatA complex to form the active translocon.

It localises to the cell inner membrane. Part of the twin-arginine translocation (Tat) system that transports large folded proteins containing a characteristic twin-arginine motif in their signal peptide across membranes. Together with TatC, TatB is part of a receptor directly interacting with Tat signal peptides. TatB may form an oligomeric binding site that transiently accommodates folded Tat precursor proteins before their translocation. The sequence is that of Sec-independent protein translocase protein TatB from Bordetella parapertussis (strain 12822 / ATCC BAA-587 / NCTC 13253).